We begin with the raw amino-acid sequence, 328 residues long: Peroxidase 25 (328 aa).

Residues 1–26 (MGVYLGKYCYIMIIMLVLVLGKEVRS) form the signal peptide. 4 disulfide bridges follow: Cys-38–Cys-114, Cys-71–Cys-76, Cys-120–Cys-324, and Cys-198–Cys-230. Residue His-69 is the Proton acceptor of the active site. Positions 70, 73, 75, 77, and 79 each coordinate Ca(2+). Pro-161 contacts substrate. His-191 is a binding site for heme b. Thr-192 provides a ligand contact to Ca(2+). Asn-207 carries N-linked (GlcNAc...) asparagine glycosylation. Ca(2+) contacts are provided by Asp-243, Ser-246, and Asp-251.

This sequence belongs to the peroxidase family. Classical plant (class III) peroxidase subfamily. It depends on heme b as a cofactor. Requires Ca(2+) as cofactor.

It is found in the secreted. The enzyme catalyses 2 a phenolic donor + H2O2 = 2 a phenolic radical donor + 2 H2O. In terms of biological role, removal of H(2)O(2), oxidation of toxic reductants, biosynthesis and degradation of lignin, suberization, auxin catabolism, response to environmental stresses such as wounding, pathogen attack and oxidative stress. These functions might be dependent on each isozyme/isoform in each plant tissue. This is Peroxidase 25 (PER25) from Arabidopsis thaliana (Mouse-ear cress).